The primary structure comprises 211 residues: Uridine kinase (211 aa).

12-19 (GGSGSGKT) lines the ATP pocket.

It belongs to the uridine kinase family.

The protein localises to the cytoplasm. It carries out the reaction uridine + ATP = UMP + ADP + H(+). It catalyses the reaction cytidine + ATP = CMP + ADP + H(+). It functions in the pathway pyrimidine metabolism; CTP biosynthesis via salvage pathway; CTP from cytidine: step 1/3. Its pathway is pyrimidine metabolism; UMP biosynthesis via salvage pathway; UMP from uridine: step 1/1. The sequence is that of Uridine kinase (udk) from Bacillus subtilis (strain 168).